Here is a 464-residue protein sequence, read N- to C-terminus: MFKHLNALFIGLALFACTSGAVAQTIKPIETPVPVRPAGQKDVVGLTTPKLDVVRVGFIGLGMRGPGAVERFTHIPGTQIVALCDLIPERVAGAQKILTKANLPEAASYSGSEDAWKKLCERKDIDLVYIATDWKHHAQMAIYAMEHGKHVAIEVPSAMTLDEIWALINTSEKTRKHCMQLENCVYDFFELTTLNMAQQGVFGEVLHTEGAYIHNLEDFWPYYWNNWRMDYNQNHRGDVYATHGMGPACQLLDIHRGDKMNYLVSMDTKAVNGPAYIKKTTGKEVKDFQNGDQTSTLIRTEKGKTILIQHNVMTPRPYSRMYQVVGADGYASKYPIEEYCMRPTQIASNDVPNHEKLNAHGSVPADVKKALMDKYKHPIHKELEETAKKVGGHGGMDYIMDYRLVYCLRNGLPLDMDVYDLAEWCCMADLTKLSIENSSAPVAIPDFTRGAWNKVKGYRHAFAK.

An N-terminal signal peptide occupies residues Met1–Ala16. The N-palmitoyl cysteine moiety is linked to residue Cys17. The S-diacylglycerol cysteine moiety is linked to residue Cys17. NAD(+) contacts are provided by residues Met63–Arg64, Asp85, Trp134–His137, Glu154–Val155, and Asn183. Substrate-binding positions include Tyr212, Arg228, Tyr240–His243, and Tyr318. NAD(+) is bound at residue Tyr240.

Belongs to the Gfo/Idh/MocA family. Glycosyl hydrolase 109 subfamily. It depends on NAD(+) as a cofactor.

The protein resides in the cell membrane. Glycosidase. Has no alpha-N-acetylgalactosaminidase activity. The protein is Glycosyl hydrolase family 109 protein 1 of Bacteroides fragilis (strain ATCC 25285 / DSM 2151 / CCUG 4856 / JCM 11019 / LMG 10263 / NCTC 9343 / Onslow / VPI 2553 / EN-2).